The following is a 216-amino-acid chain: Uracil phosphoribosyltransferase (216 aa).

5-phospho-alpha-D-ribose 1-diphosphate-binding positions include Arg-85, Arg-110, and 135 to 143 (DPMVATGYS). Uracil-binding positions include Ile-200 and 205 to 207 (GDA). Residue Asp-206 coordinates 5-phospho-alpha-D-ribose 1-diphosphate.

Belongs to the UPRTase family. It depends on Mg(2+) as a cofactor.

It catalyses the reaction UMP + diphosphate = 5-phospho-alpha-D-ribose 1-diphosphate + uracil. It participates in pyrimidine metabolism; UMP biosynthesis via salvage pathway; UMP from uracil: step 1/1. With respect to regulation, allosterically activated by GTP. Its function is as follows. Catalyzes the conversion of uracil and 5-phospho-alpha-D-ribose 1-diphosphate (PRPP) to UMP and diphosphate. In Paraburkholderia phymatum (strain DSM 17167 / CIP 108236 / LMG 21445 / STM815) (Burkholderia phymatum), this protein is Uracil phosphoribosyltransferase.